A 477-amino-acid polypeptide reads, in one-letter code: Probable cytosolic Fe-S cluster assembly factor GM20417 (477 aa).

[4Fe-4S] cluster is bound by residues Cys23, Cys68, Cys71, Cys74, Cys187, Cys243, Cys395, and Cys399.

This sequence belongs to the NARF family.

Functionally, component of the cytosolic iron-sulfur (Fe/S) protein assembly machinery. Required for maturation of extramitochondrial Fe/S proteins. This chain is Probable cytosolic Fe-S cluster assembly factor GM20417, found in Drosophila sechellia (Fruit fly).